The primary structure comprises 138 residues: Endoribonuclease YbeY (138 aa).

Residues histidine 98, histidine 102, and histidine 108 each contribute to the Zn(2+) site.

The protein belongs to the endoribonuclease YbeY family. It depends on Zn(2+) as a cofactor.

The protein localises to the cytoplasm. Single strand-specific metallo-endoribonuclease involved in late-stage 70S ribosome quality control and in maturation of the 3' terminus of the 16S rRNA. This is Endoribonuclease YbeY from Thermosipho melanesiensis (strain DSM 12029 / CIP 104789 / BI429).